The primary structure comprises 201 residues: 3-isopropylmalate dehydratase small subunit (201 aa).

Belongs to the LeuD family. LeuD type 1 subfamily. In terms of assembly, heterodimer of LeuC and LeuD.

It carries out the reaction (2R,3S)-3-isopropylmalate = (2S)-2-isopropylmalate. Its pathway is amino-acid biosynthesis; L-leucine biosynthesis; L-leucine from 3-methyl-2-oxobutanoate: step 2/4. In terms of biological role, catalyzes the isomerization between 2-isopropylmalate and 3-isopropylmalate, via the formation of 2-isopropylmaleate. This Shewanella frigidimarina (strain NCIMB 400) protein is 3-isopropylmalate dehydratase small subunit.